A 706-amino-acid chain; its full sequence is MAGIRVTKVDWQRSRNGAAHHTQEYPCPELVVRRGQSFSLTLELSRALDCEEILIFTMETGPRASEALHTKAVFQTSELERGEGWTAAREAQMEKTLTVSLASPPSAVIGRYLLSIRLSSHRKHSNRRLGEFVLLFNPWCAEDDVFLASEEERQEYVLSDSGIIFRGVEKHIRAQGWNYGQFEEDILNICLSILDRSPGHQNNPATDVSCRHNPIYVTRVISAMVNSNNDRGVVQGQWQGKYGGGTSPLHWRGSVAILQKWLKGRYKPVKYGQCWVFAGVLCTVLRCLGIATRVVSNFNSAHDTDQNLSVDKYVDSFGRTLEDLTEDSMWNFHVWNESWFARQDLGPSYNGWQVLDATPQEESEGVFRCGPASVTAIREGDVHLAHDGPFVFAEVNADYITWLWHEDESRERVYSNTKKIGRCISTKAVGSDSRVDITDLYKYPEGSRKERQVYSKAVNRLFGVEASGRRIWIRRAGGRCLWRDDLLEPATKPSIAGKFKVLEPPMLGHDLRLALCLANLTSRAQRVRVNLSGATILYTRKPVAEILHESHAVRLGPQEEKRIPITISYSKYKEDLTEDKKILLAAMCLVTKGEKLLVEKDITLEDFITIKVLGPAMVGVAVTVEVTVVNPLIERVKDCALMVEGSGLLQEQLSIDVPTLEPQERASVQFDITPSKSGPRQLQVDLVSPHFPDIKGFVIVHVATAK.

3 residues coordinate Ca(2+): alanine 223, asparagine 226, and asparagine 228. Residue cysteine 274 is part of the active site. Residues aspartate 303, aspartate 305, asparagine 307, serine 309, and aspartate 327 each coordinate Ca(2+). Catalysis depends on residues histidine 333 and aspartate 356. Ca(2+)-binding residues include asparagine 396, threonine 417, glutamate 445, and glutamate 450.

This sequence belongs to the transglutaminase superfamily. Transglutaminase family. Requires Ca(2+) as cofactor.

It is found in the cytoplasm. It catalyses the reaction L-glutaminyl-[protein] + L-lysyl-[protein] = [protein]-L-lysyl-N(6)-5-L-glutamyl-[protein] + NH4(+). Functionally, catalyzes the cross-linking of proteins and the conjugation of polyamines to proteins. The polypeptide is Protein-glutamine gamma-glutamyltransferase 6 (TGM6) (Homo sapiens (Human)).